The primary structure comprises 201 residues: Imidazoleglycerol-phosphate dehydratase (201 aa).

This sequence belongs to the imidazoleglycerol-phosphate dehydratase family.

Its subcellular location is the cytoplasm. It catalyses the reaction D-erythro-1-(imidazol-4-yl)glycerol 3-phosphate = 3-(imidazol-4-yl)-2-oxopropyl phosphate + H2O. It functions in the pathway amino-acid biosynthesis; L-histidine biosynthesis; L-histidine from 5-phospho-alpha-D-ribose 1-diphosphate: step 6/9. The protein is Imidazoleglycerol-phosphate dehydratase of Synechococcus sp. (strain CC9902).